Here is a 298-residue protein sequence, read N- to C-terminus: Urease accessory protein UreD (298 aa).

It belongs to the UreD family. In terms of assembly, ureD, UreF and UreG form a complex that acts as a GTP-hydrolysis-dependent molecular chaperone, activating the urease apoprotein by helping to assemble the nickel containing metallocenter of UreC. The UreE protein probably delivers the nickel.

The protein resides in the cytoplasm. Functionally, required for maturation of urease via the functional incorporation of the urease nickel metallocenter. In Frankia alni (strain DSM 45986 / CECT 9034 / ACN14a), this protein is Urease accessory protein UreD.